The sequence spans 265 residues: Mlc titration factor A (265 aa).

Zn(2+) contacts are provided by His-111, His-148, His-152, and Glu-211.

The protein belongs to the MtfA family. Interacts with Mlc. It depends on Zn(2+) as a cofactor.

It is found in the cytoplasm. In terms of biological role, involved in the modulation of the activity of the glucose-phosphotransferase system (glucose-PTS). Interacts with the transcriptional repressor Mlc, preventing its interaction with DNA and leading to the modulation of expression of genes regulated by Mlc, including ptsG, which encodes the PTS system glucose-specific EIICB component. Functionally, shows zinc-dependent metallopeptidase activity. This chain is Mlc titration factor A, found in Shigella sonnei (strain Ss046).